A 355-amino-acid chain; its full sequence is Protein FIP1 (355 aa).

4 consecutive transmembrane segments (helical) span residues 42–62, 72–92, 113–133, and 149–169; these read YLYMLLLAGYAILAAGAPWMF, LLCCCDVALLVVTGVFQQYFV, VVRLPFAIAAYGTAAMLLVIV, and IIMLVEAVGAGFFMGLYIGYV. Residues 220 to 337 are a coiled coil; the sequence is LHFLSEEILC…RMSNSELQKE (118 aa). A compositionally biased stretch (basic and acidic residues) spans 331–340; that stretch reads NSELQKEVAS. A disordered region spans residues 331-355; sequence NSELQKEVASTRRKQMLETTTSEQP.

This sequence belongs to the TMEM192 family. Interacts with FRI.

The protein localises to the membrane. This is Protein FIP1 from Arabidopsis thaliana (Mouse-ear cress).